Reading from the N-terminus, the 262-residue chain is Adenosylcobinamide-GDP ribazoletransferase (262 aa).

6 helical membrane passes run 43–63 (YFGLVGLLVGLLSAIVFWLTQ), 66–86 (LPAGVSVLLSMVTGVLLTGGF), 120–140 (GALALMLVLMLKWQLLVELAL), 146–166 (AGSAMIVAHTVSRVVAASLIF), 191–211 (LFILIASGVLVLLVLKGIAAL), and 242–262 (AAQQICEIVCYFVLLVVGSIL).

It belongs to the CobS family. It depends on Mg(2+) as a cofactor.

The protein resides in the cell inner membrane. It catalyses the reaction alpha-ribazole + adenosylcob(III)inamide-GDP = adenosylcob(III)alamin + GMP + H(+). The catalysed reaction is alpha-ribazole 5'-phosphate + adenosylcob(III)inamide-GDP = adenosylcob(III)alamin 5'-phosphate + GMP + H(+). The protein operates within cofactor biosynthesis; adenosylcobalamin biosynthesis; adenosylcobalamin from cob(II)yrinate a,c-diamide: step 7/7. Joins adenosylcobinamide-GDP and alpha-ribazole to generate adenosylcobalamin (Ado-cobalamin). Also synthesizes adenosylcobalamin 5'-phosphate from adenosylcobinamide-GDP and alpha-ribazole 5'-phosphate. This is Adenosylcobinamide-GDP ribazoletransferase from Shewanella sp. (strain ANA-3).